Consider the following 198-residue polypeptide: Molybdenum cofactor guanylyltransferase (198 aa).

GTP is bound by residues 14–16 (LAG), K27, D73, and D103. D103 is a binding site for Mg(2+).

This sequence belongs to the MobA family. In terms of assembly, monomer. Mg(2+) is required as a cofactor.

It localises to the cytoplasm. The enzyme catalyses Mo-molybdopterin + GTP + H(+) = Mo-molybdopterin guanine dinucleotide + diphosphate. Its function is as follows. Transfers a GMP moiety from GTP to Mo-molybdopterin (Mo-MPT) cofactor (Moco or molybdenum cofactor) to form Mo-molybdopterin guanine dinucleotide (Mo-MGD) cofactor. In Pseudomonas aeruginosa (strain ATCC 15692 / DSM 22644 / CIP 104116 / JCM 14847 / LMG 12228 / 1C / PRS 101 / PAO1), this protein is Molybdenum cofactor guanylyltransferase.